Here is a 187-residue protein sequence, read N- to C-terminus: UPF0301 protein Cpha266_0885 (187 aa).

This sequence belongs to the UPF0301 (AlgH) family.

This chain is UPF0301 protein Cpha266_0885, found in Chlorobium phaeobacteroides (strain DSM 266 / SMG 266 / 2430).